Reading from the N-terminus, the 305-residue chain is UDP-3-O-acyl-N-acetylglucosamine deacetylase (305 aa).

Zn(2+) contacts are provided by histidine 79, histidine 238, and aspartate 242. The Proton donor role is filled by histidine 265.

This sequence belongs to the LpxC family. The cofactor is Zn(2+).

It carries out the reaction a UDP-3-O-[(3R)-3-hydroxyacyl]-N-acetyl-alpha-D-glucosamine + H2O = a UDP-3-O-[(3R)-3-hydroxyacyl]-alpha-D-glucosamine + acetate. It functions in the pathway glycolipid biosynthesis; lipid IV(A) biosynthesis; lipid IV(A) from (3R)-3-hydroxytetradecanoyl-[acyl-carrier-protein] and UDP-N-acetyl-alpha-D-glucosamine: step 2/6. In terms of biological role, catalyzes the hydrolysis of UDP-3-O-myristoyl-N-acetylglucosamine to form UDP-3-O-myristoylglucosamine and acetate, the committed step in lipid A biosynthesis. This Histophilus somni (strain 129Pt) (Haemophilus somnus) protein is UDP-3-O-acyl-N-acetylglucosamine deacetylase.